The sequence spans 333 residues: Quinolinate synthase (333 aa).

2 residues coordinate iminosuccinate: H41 and S58. C103 contacts [4Fe-4S] cluster. Residues 129–131 (YIN) and S146 contribute to the iminosuccinate site. C189 is a binding site for [4Fe-4S] cluster. Residues 215–217 (HPE) and T232 each bind iminosuccinate. C282 contacts [4Fe-4S] cluster.

Belongs to the quinolinate synthase family. Type 2 subfamily. [4Fe-4S] cluster serves as cofactor.

The protein localises to the cytoplasm. It catalyses the reaction iminosuccinate + dihydroxyacetone phosphate = quinolinate + phosphate + 2 H2O + H(+). It functions in the pathway cofactor biosynthesis; NAD(+) biosynthesis; quinolinate from iminoaspartate: step 1/1. Its function is as follows. Catalyzes the condensation of iminoaspartate with dihydroxyacetone phosphate to form quinolinate. The chain is Quinolinate synthase from Prochlorococcus marinus (strain MIT 9313).